Consider the following 308-residue polypeptide: Aspartate carbamoyltransferase catalytic subunit (308 aa).

Carbamoyl phosphate-binding residues include R58 and T59. Residue K86 coordinates L-aspartate. The carbamoyl phosphate site is built by R108, H136, and Q139. Residues R169 and R227 each contribute to the L-aspartate site. Residues G268 and P269 each contribute to the carbamoyl phosphate site.

Belongs to the aspartate/ornithine carbamoyltransferase superfamily. ATCase family. In terms of assembly, heterododecamer (2C3:3R2) of six catalytic PyrB chains organized as two trimers (C3), and six regulatory PyrI chains organized as three dimers (R2).

The catalysed reaction is carbamoyl phosphate + L-aspartate = N-carbamoyl-L-aspartate + phosphate + H(+). The protein operates within pyrimidine metabolism; UMP biosynthesis via de novo pathway; (S)-dihydroorotate from bicarbonate: step 2/3. Functionally, catalyzes the condensation of carbamoyl phosphate and aspartate to form carbamoyl aspartate and inorganic phosphate, the committed step in the de novo pyrimidine nucleotide biosynthesis pathway. The sequence is that of Aspartate carbamoyltransferase catalytic subunit from Chloroflexus aurantiacus (strain ATCC 29366 / DSM 635 / J-10-fl).